We begin with the raw amino-acid sequence, 338 residues long: E3 ubiquitin-protein ligase RING1 (338 aa).

The interval 102 to 124 (TTTSSSASIDPNNPSLSGPTRSG) is disordered. Positions 110-121 (IDPNNPSLSGPT) are enriched in polar residues. An RING-type; atypical zinc finger spans residues 224–265 (CAVCMDDFEEGTEAKQMPCKHLYHKDCLLPWLELHNSCPVCR). 2 stretches are compositionally biased toward basic and acidic residues: residues 267-279 (ELPT…ERRV) and 298-309 (SDGDNRTVERSF). Positions 267 to 338 (ELPTDDPDYE…NAETRQEDLD (72 aa)) are disordered.

Auto-ubiquitinated as part of the enzymatic reaction. Mostly expressed in cotton fibers, and, to a lower extent, in leaves and flowers.

It carries out the reaction S-ubiquitinyl-[E2 ubiquitin-conjugating enzyme]-L-cysteine + [acceptor protein]-L-lysine = [E2 ubiquitin-conjugating enzyme]-L-cysteine + N(6)-ubiquitinyl-[acceptor protein]-L-lysine.. The protein operates within protein modification; protein ubiquitination. E3 ubiquitin-protein ligase which accepts ubiquitin from an E2 ubiquitin-conjugating enzyme in the form of a thioester and then directly transfers the ubiquitin to targeted substrates. Promotes polyubiquitination of target proteins. The sequence is that of E3 ubiquitin-protein ligase RING1 (RING1) from Gossypium hirsutum (Upland cotton).